The primary structure comprises 372 residues: Adaptive-response sensory kinase SasA (372 aa).

The Histidine kinase domain maps to 147–360 (MVAHELRTPL…CFHFTVPVWQ (214 aa)). Residue histidine 150 is modified to Phosphohistidine; by autocatalysis.

In terms of assembly, homooligomerizes. Interacts with KaiC. Participates in the KaiBC complex, whose core is composed of a KaiC homohexamer and 6 KaiB.

It catalyses the reaction ATP + protein L-histidine = ADP + protein N-phospho-L-histidine.. In terms of biological role, member of the two-component regulatory system SasA/RpaA involved in genome-wide circadian gene expression. One of several clock output pathways. Participates in the Kai clock protein complex, the main circadian regulator in cyanobacteria, via its interaction with KaiC. KaiC enhances the autophosphorylation activity of SasA, which then transfers its phosphate group to RpaA to activate it. In addition to its output function, recruits fold-shifted KaiB (KaiB(fs)) to KaiC to cooperatively form the KaiB(6):KaiC(6) complex (independent of SasA kinase activity). Required for robustness of the circadian rhythm of gene expression and is involved in clock output, also required for adaptation to light/dark cycles. In Prochlorococcus marinus (strain AS9601), this protein is Adaptive-response sensory kinase SasA.